A 660-amino-acid chain; its full sequence is Probable beta-hexosaminidase fdl (660 aa).

The signal sequence occupies residues 1–36; it reads MSLAVSLRRALLVLLTGAIFILTVLYWNQGVTKAQA. Residues asparagine 210, asparagine 412, and asparagine 452 are each glycosylated (N-linked (GlcNAc...) asparagine).

It belongs to the glycosyl hydrolase 20 family. In third instar larval and early pupal brains, expressed in cells sending projections across the interhemispheric junction. In adult brain, expressed in mushroom body, ellipsoid body and pars intercerebralis.

The enzyme catalyses Hydrolysis of terminal non-reducing N-acetyl-D-hexosamine residues in N-acetyl-beta-D-hexosaminides.. In terms of biological role, involved in brain restructurization via hormonal control during metamorphosis. Implicated in N-glycan processing. The protein is Probable beta-hexosaminidase fdl (fdl) of Drosophila melanogaster (Fruit fly).